The following is a 1510-amino-acid chain: ABC transporter C family MRP4 (1510 aa).

12 consecutive transmembrane segments (helical) span residues 12–32, 55–75, 78–98, 109–129, 138–158, 177–197, 319–339, 342–362, 373–393, 427–447, 453–473, and 540–560; these read EAVA…LLLL, PAVV…AGAW, AVLA…SYEV, ALLL…LALQ, FPAL…VIAY, MVAN…GVMG, TFAA…SYFV, LSGN…FFVA, WYLG…AMVY, AWYF…LAIL, IAMV…VPVA, and FVFW…CILL. One can recognise an ABC transmembrane type-1 1 domain in the interval 320–595; the sequence is FAAVNTIVSY…FPDLISMMAQ (276 aa). An ABC transporter 1 domain is found at 629–852; the sequence is VDIKDGAFSW…GTDFNALVSA (224 aa). 664-671 contributes to the ATP binding site; sequence GVIGSGKS. The segment at 889-925 is disordered; it reads LKNKMCENGQPSNTRGIKEKKKKEERKKKRTVQEEER. Residues 906 to 918 are compositionally biased toward basic residues; sequence KEKKKKEERKKKR. 6 helical membrane-spanning segments follow: residues 945–965, 985–1005, 1060–1082, 1086–1108, 1154–1174, and 1179–1199; these read GTLI…QIAS, SVVL…FVFM, IAFR…AVMS, WQVL…YYIA, LLDC…WLCL, and LSTF…PGTI. In terms of domain architecture, ABC transmembrane type-1 2 spans 950–1220; it reads LIILAQTMFQ…GLNLNARMSR (271 aa). The region spanning 1267-1501 is the ABC transporter 2 domain; it reads IELIDLKVRY…KSSMFIQLVS (235 aa). 1301–1308 contributes to the ATP binding site; that stretch reads GRTGSGKS.

Belongs to the ABC transporter superfamily. ABCC family. Conjugate transporter (TC 3.A.1.208) subfamily. In terms of tissue distribution, expressed in roots, leaves, stalks, tassels, silks, developing seeds and developing embryos.

The protein localises to the membrane. Functionally, ABC transporter that may affect phytic acid transport and compartmentalization. May function directly or indirectly in removing phytic acid from the cytosol or in vesicle trafficking. Required for phytic acid accumulation in developing seeds. Phytic acid is the primary storage form of phosphorus in cereal grains and other plant seeds. The protein is ABC transporter C family MRP4 of Zea mays (Maize).